We begin with the raw amino-acid sequence, 210 residues long: Ribonuclease HII (210 aa).

Positions 18 to 207 constitute an RNase H type-2 domain; the sequence is RFVAGVDEVG…VHKILCKEET (190 aa). A divalent metal cation-binding residues include Asp-24, Glu-25, and Asp-115.

It belongs to the RNase HII family. The cofactor is Mn(2+). Mg(2+) is required as a cofactor.

Its subcellular location is the cytoplasm. It catalyses the reaction Endonucleolytic cleavage to 5'-phosphomonoester.. Endonuclease that specifically degrades the RNA of RNA-DNA hybrids. The protein is Ribonuclease HII of Paracoccus denitrificans (strain Pd 1222).